Here is a 418-residue protein sequence, read N- to C-terminus: Perilipin-1 homolog (418 aa).

Residues 211 to 275 (LTIGQRVKNL…EKKTWVIEKS (65 aa)) form a required for lipid droplet localization region.

It belongs to the perilipin family. In terms of tissue distribution, expressed in intestinal and epidermal cells. Expressed in the muscle and hypodermis.

It is found in the lipid droplet. In terms of biological role, lipid droplet-associated protein which plays a role in lipid droplet clustering. This Caenorhabditis elegans protein is Perilipin-1 homolog.